Consider the following 840-residue polypeptide: DNA helicase MCM8 (840 aa).

Residues 16-54 form a disordered region; the sequence is QSWKRGRGGGNFSGKWREREHRPDLSKTTGKRTSEQTPQ. The segment covering 30–40 has biased composition (basic and acidic residues); it reads KWREREHRPDL. Positions 402–609 constitute an MCM domain; sequence LFKLIVNSLC…HHDHLLSEHV (208 aa). 454–461 serves as a coordination point for ATP; it reads GDPGLGKS. Position 630 is a phosphoserine (Ser630).

The protein belongs to the MCM family. In terms of assembly, component of the MCM8-MCM9 complex, which forms a hexamer composed of MCM8 and MCM9. Interacts with the DNA mismatch repair (MMR) complex composed at least of MSH2, MSH3, MSH6, PMS1 and MLH1. Interacts with RAD51; the interaction recruits RAD51 to DNA damage sites. Interacts with the MRN complex composed of MRE11, RAD50 and NBN/NBS1. Interacts with CDC6 and ORC2. Interacts with HROB; the interaction recruits the MCM8-MCM9 complex to DNA damage sites. In terms of tissue distribution, highest levels in placenta, lung and pancreas. Low levels in skeletal muscle and kidney. Expressed in various tumors with highest levels in colon and lung cancers.

Its subcellular location is the nucleus. The protein resides in the chromosome. It catalyses the reaction ATP + H2O = ADP + phosphate + H(+). Functionally, component of the MCM8-MCM9 complex, a complex involved in the repair of double-stranded DNA breaks (DBSs) and DNA interstrand cross-links (ICLs) by homologous recombination (HR). Required for DNA resection by the MRE11-RAD50-NBN/NBS1 (MRN) complex by recruiting the MRN complex to the repair site and by promoting the complex nuclease activity. Probably by regulating the localization of the MNR complex, indirectly regulates the recruitment of downstream effector RAD51 to DNA damage sites including DBSs and ICLs. The MCM8-MCM9 complex is dispensable for DNA replication and S phase progression. However, may play a non-essential for DNA replication: may be involved in the activation of the prereplicative complex (pre-RC) during G(1) phase by recruiting CDC6 to the origin recognition complex (ORC). Probably by regulating HR, plays a key role during gametogenesis. Stabilizes MCM9 protein. In Homo sapiens (Human), this protein is DNA helicase MCM8 (MCM8).